The sequence spans 343 residues: Phenylalanine--tRNA ligase alpha subunit (343 aa).

Glutamate 256 lines the Mg(2+) pocket.

It belongs to the class-II aminoacyl-tRNA synthetase family. Phe-tRNA synthetase alpha subunit type 1 subfamily. As to quaternary structure, tetramer of two alpha and two beta subunits. Mg(2+) is required as a cofactor.

The protein resides in the cytoplasm. It catalyses the reaction tRNA(Phe) + L-phenylalanine + ATP = L-phenylalanyl-tRNA(Phe) + AMP + diphosphate + H(+). The polypeptide is Phenylalanine--tRNA ligase alpha subunit (Phytoplasma australiense).